A 179-amino-acid chain; its full sequence is ATP-dependent protease subunit HslV (179 aa).

Residue Thr6 is part of the active site. Positions 164, 167, and 170 each coordinate Na(+).

It belongs to the peptidase T1B family. HslV subfamily. As to quaternary structure, a double ring-shaped homohexamer of HslV is capped on each side by a ring-shaped HslU homohexamer. The assembly of the HslU/HslV complex is dependent on binding of ATP.

It is found in the cytoplasm. The enzyme catalyses ATP-dependent cleavage of peptide bonds with broad specificity.. With respect to regulation, allosterically activated by HslU binding. In terms of biological role, protease subunit of a proteasome-like degradation complex believed to be a general protein degrading machinery. This chain is ATP-dependent protease subunit HslV, found in Listeria monocytogenes serotype 4b (strain CLIP80459).